The following is a 275-amino-acid chain: Dermonecrotic toxin LspiSicTox-betaIE4i (275 aa).

Positions 24 and 26 each coordinate Mg(2+). The active-site Nucleophile is His-40. 2 disulfides stabilise this stretch: Cys-44–Cys-50 and Cys-46–Cys-188. Mg(2+) is bound at residue Asp-84.

Belongs to the arthropod phospholipase D family. Class II subfamily. Mg(2+) is required as a cofactor. Expressed by the venom gland.

The protein resides in the secreted. The enzyme catalyses an N-(acyl)-sphingosylphosphocholine = an N-(acyl)-sphingosyl-1,3-cyclic phosphate + choline. The catalysed reaction is an N-(acyl)-sphingosylphosphoethanolamine = an N-(acyl)-sphingosyl-1,3-cyclic phosphate + ethanolamine. It catalyses the reaction a 1-acyl-sn-glycero-3-phosphocholine = a 1-acyl-sn-glycero-2,3-cyclic phosphate + choline. It carries out the reaction a 1-acyl-sn-glycero-3-phosphoethanolamine = a 1-acyl-sn-glycero-2,3-cyclic phosphate + ethanolamine. Functionally, dermonecrotic toxins cleave the phosphodiester linkage between the phosphate and headgroup of certain phospholipids (sphingolipid and lysolipid substrates), forming an alcohol (often choline) and a cyclic phosphate. This toxin acts on sphingomyelin (SM). It may also act on ceramide phosphoethanolamine (CPE), lysophosphatidylcholine (LPC) and lysophosphatidylethanolamine (LPE), but not on lysophosphatidylserine (LPS), and lysophosphatidylglycerol (LPG). It acts by transphosphatidylation, releasing exclusively cyclic phosphate products as second products. Induces dermonecrosis, hemolysis, increased vascular permeability, edema, inflammatory response, and platelet aggregation. The chain is Dermonecrotic toxin LspiSicTox-betaIE4i from Loxosceles spinulosa (Recluse spider).